Here is a 395-residue protein sequence, read N- to C-terminus: Flap endonuclease 1 (395 aa).

The interval methionine 1 to alanine 108 is N-domain. Aspartate 34 is a Mg(2+) binding site. Arginine 74 provides a ligand contact to DNA. 5 residues coordinate Mg(2+): aspartate 90, glutamate 162, glutamate 164, aspartate 183, and aspartate 185. An I-domain region spans residues methionine 126–tyrosine 257. Glutamate 162 lines the DNA pocket. Residues glycine 235 and aspartate 237 each contribute to the DNA site. Aspartate 237 contacts Mg(2+). Residues threonine 340–phenylalanine 348 are interaction with PCNA.

The protein belongs to the XPG/RAD2 endonuclease family. FEN1 subfamily. Interacts with PCNA. Three molecules of FEN1 bind to one PCNA trimer with each molecule binding to one PCNA monomer. PCNA stimulates the nuclease activity without altering cleavage specificity. The cofactor is Mg(2+). In terms of processing, phosphorylated. Phosphorylation upon DNA damage induces relocalization to the nuclear plasma.

It localises to the nucleus. The protein resides in the nucleolus. The protein localises to the nucleoplasm. Its subcellular location is the mitochondrion. Functionally, structure-specific nuclease with 5'-flap endonuclease and 5'-3' exonuclease activities involved in DNA replication and repair. During DNA replication, cleaves the 5'-overhanging flap structure that is generated by displacement synthesis when DNA polymerase encounters the 5'-end of a downstream Okazaki fragment. It enters the flap from the 5'-end and then tracks to cleave the flap base, leaving a nick for ligation. Also involved in the long patch base excision repair (LP-BER) pathway, by cleaving within the apurinic/apyrimidinic (AP) site-terminated flap. Acts as a genome stabilization factor that prevents flaps from equilibrating into structures that lead to duplications and deletions. Also possesses 5'-3' exonuclease activity on nicked or gapped double-stranded DNA, and exhibits RNase H activity. Also involved in replication and repair of rDNA and in repairing mitochondrial DNA. This Leishmania braziliensis protein is Flap endonuclease 1.